Reading from the N-terminus, the 465-residue chain is Respiratory transcription factor ZNF1 (465 aa).

A DNA-binding region (zn(2)-C6 fungal-type) is located at residues C8–C34.

Belongs to the MAL13 family.

Its subcellular location is the nucleus. Its function is as follows. Transcription factor that regulates respiratory growth and plays a critical role in stress adaptation during non-fermentative growth. Binds to promoters of genes involved in non-fermentative metabolism, including processes such as gluconeogenesis (PCK1, FBP1 and MDH2), glyoxylate shunt (MLS1 and ICL1) and the tricarboxylic acid cycle (ACO1). Plays a role in maintaining mitochondrial morphology and function. Also plays a role in tolerance to pH and osmotic stress, especially during the oxidative metabolism. The protein is Respiratory transcription factor ZNF1 of Saccharomyces cerevisiae (strain ATCC 204508 / S288c) (Baker's yeast).